Reading from the N-terminus, the 354-residue chain is Lariat debranching enzyme (354 aa).

Residues Cys14, His16, and Asp45 each contribute to the a divalent metal cation site. RNA-binding residues include Lys59, Asn90, His91, Lys134, and His156. A divalent metal cation is bound at residue Asn90. The interval 130–158 (SGIYKSFDEKKPYTYPPSPNDVVSLFHTR) is lariat recognition loop. Position 180 (His180) interacts with a divalent metal cation. Residues Gly201, Asp205, His230, Met231, and His232 each coordinate RNA. Residue His230 coordinates a divalent metal cation. His232 contacts a divalent metal cation.

This sequence belongs to the lariat debranching enzyme family. The cofactor is Fe(2+). Zn(2+) serves as cofactor. Mn(2+) is required as a cofactor.

It localises to the cytoplasm. The protein localises to the perinuclear region. Its activity is regulated as follows. Active in presence of diverse metals including Fe(2+), Zn(2+) and Mn(2+). Binds two metal cations in two adjacent alpha and beta metal-binding pockets. The activity is the highest with Fe(2+) bound to the 2 metal-binding sites. The activity is slightly lower with Fe(2+) bound to the beta site and Zn(2+) to the alpha site and decreases further when only Zn(2+) is bound. No activity with Mn(2+). However, another study showed activity with Mn(2+) bound to the beta site and Zn(2+) to the alpha site. Mn(2+) appears unable to bind to the alpha site. Cleaves the 2'-5' phosphodiester linkage at the branch point of excised lariat intron RNA and converts them into linear molecules that can be subsequently degraded, thereby facilitating ribonucleotide turnover. In Entamoeba histolytica (strain ATCC 30459 / HM-1:IMSS / ABRM), this protein is Lariat debranching enzyme.